The chain runs to 351 residues: MKNSNKLIASVVTLASVMALAACQSTNDNTKVISMKGDTISVSDFYNETKNTEVSQKAMLNLVISRVFEAQYGDKVSKKEVEKAYHKTAEQYGASFSAALAQSSLTPETFKRQIRSSKLVEYAVKEAAKKELTTQEYKKAYESYTPTMAVEMITLDNDETAKSVLEELKAEGADFTAIAKEKTTTPEKKVTYKFDSGAINVPTDVVKAASSLNEGGISDVISVLDPTSYQKKFYIVKVTKKAEKKSDWQEYKKRLKAIIIAEKSKDMNFQNKVIANALDKANVKIKDKAFANILAQYANLGQKTKAASESSTTSESSKAAEENPSESEQTQTSSAEEPTETEAQTQEPAAQ.

Residues Met1–Ala22 form the signal peptide. A lipid anchor (N-palmitoyl cysteine) is attached at Cys23. Cys23 carries S-diacylglycerol cysteine lipidation. Positions Thr145–Lys240 constitute a PpiC domain. Composition is skewed to low complexity over residues Lys303–Ser317 and Glu326–Gln351. A disordered region spans residues Lys303–Gln351.

The protein belongs to the PrsA family.

It is found in the cell membrane. It catalyses the reaction [protein]-peptidylproline (omega=180) = [protein]-peptidylproline (omega=0). Functionally, plays a major role in protein secretion by helping the post-translocational extracellular folding of several secreted proteins. In Streptococcus pyogenes serotype M18 (strain MGAS8232), this protein is Foldase protein PrsA 1 (prsA1).